Reading from the N-terminus, the 241-residue chain is Phycocyanobilin:ferredoxin oxidoreductase (241 aa).

It belongs to the HY2 family.

The catalysed reaction is (2R,3Z)-phycocyanobilin + 4 oxidized [2Fe-2S]-[ferredoxin] = biliverdin IXalpha + 4 reduced [2Fe-2S]-[ferredoxin] + 4 H(+). Functionally, catalyzes the four-electron reduction of biliverdin IX-alpha (2-electron reduction at both the A and D rings); the reaction proceeds via an isolatable 2-electron intermediate, 181,182-dihydrobiliverdin. This chain is Phycocyanobilin:ferredoxin oxidoreductase, found in Prochlorococcus marinus (strain MIT 9301).